Consider the following 95-residue polypeptide: Aspartyl/glutamyl-tRNA(Asn/Gln) amidotransferase subunit C (95 aa).

The protein belongs to the GatC family. As to quaternary structure, heterotrimer of A, B and C subunits.

The catalysed reaction is L-glutamyl-tRNA(Gln) + L-glutamine + ATP + H2O = L-glutaminyl-tRNA(Gln) + L-glutamate + ADP + phosphate + H(+). It carries out the reaction L-aspartyl-tRNA(Asn) + L-glutamine + ATP + H2O = L-asparaginyl-tRNA(Asn) + L-glutamate + ADP + phosphate + 2 H(+). Allows the formation of correctly charged Asn-tRNA(Asn) or Gln-tRNA(Gln) through the transamidation of misacylated Asp-tRNA(Asn) or Glu-tRNA(Gln) in organisms which lack either or both of asparaginyl-tRNA or glutaminyl-tRNA synthetases. The reaction takes place in the presence of glutamine and ATP through an activated phospho-Asp-tRNA(Asn) or phospho-Glu-tRNA(Gln). The protein is Aspartyl/glutamyl-tRNA(Asn/Gln) amidotransferase subunit C of Hyphomonas neptunium (strain ATCC 15444).